Consider the following 123-residue polypeptide: Large ribosomal subunit protein bL12 (123 aa).

This sequence belongs to the bacterial ribosomal protein bL12 family. In terms of assembly, homodimer. Part of the ribosomal stalk of the 50S ribosomal subunit. Forms a multimeric L10(L12)X complex, where L10 forms an elongated spine to which 2 to 4 L12 dimers bind in a sequential fashion. Binds GTP-bound translation factors.

Functionally, forms part of the ribosomal stalk which helps the ribosome interact with GTP-bound translation factors. Is thus essential for accurate translation. This Geobacillus thermodenitrificans (strain NG80-2) protein is Large ribosomal subunit protein bL12.